Reading from the N-terminus, the 147-residue chain is Hemoglobin subunit beta (147 aa).

Val-2 carries the post-translational modification N-acetylvaline. In terms of domain architecture, Globin spans 3–147 (HLSAEEKGLV…VATALAHKYH (145 aa)). Thr-13 bears the Phosphothreonine mark. Phosphoserine is present on Ser-45. Lys-60 carries the N6-acetyllysine modification. A heme b-binding site is contributed by His-64. Lys-83 carries the post-translational modification N6-acetyllysine. His-93 provides a ligand contact to heme b. Cys-94 is subject to S-nitrosocysteine. Lys-145 is subject to N6-acetyllysine.

It belongs to the globin family. As to quaternary structure, heterotetramer of two alpha chains and two beta chains. In terms of tissue distribution, red blood cells.

Involved in oxygen transport from the lung to the various peripheral tissues. The protein is Hemoglobin subunit beta (HBB) of Scapanus orarius (Coast mole).